We begin with the raw amino-acid sequence, 610 residues long: Calmegin (610 aa).

A signal peptide spans 1–19 (MHFQAFWLCLGLLFISINA). At 20 to 471 (EFMDDDVETE…LMAAAEGHPW (452 aa)) the chain is on the lumenal side. K128 carries the N6-acetyllysine modification. Residues C151 and C185 are joined by a disulfide bond. Positions 258 to 338 (VPPIKPPKEI…KPDDWNEDTD (81 aa)) are disordered. Over residues 263 to 284 (PPKEIEDPNDKKPEEWDERAKI) the composition is skewed to basic and acidic residues. 8 repeat units span residues 267 to 280 (IEDPNDKKPEEWDE), 284 to 297 (IPDPSAVKPEDWDE), 303 to 316 (IEDSSVVKPAGWLD), 322 to 335 (IPDPNAEKPDDWNE), 339 to 352 (GEWEAPQILNPACR), 356 to 369 (GEWKPPMIDNPKYK), 370 to 383 (GVWRPPLVDNPNYQ), and 384 to 397 (GIWSPRKIPNPDYF). Residues 317–332 (DEPKFIPDPNAEKPDD) show a composition bias toward basic and acidic residues. The interval 317–350 (DEPKFIPDPNAEKPDDWNEDTDGEWEAPQILNPA) is interaction with PPIB. Residues C351 and C355 are joined by a disulfide bond. A helical transmembrane segment spans residues 472–492 (LWLIYLVTAGVPIALITSFCW). Residues 493–610 (PRKVKKKHKD…SVRKRRVRKD (118 aa)) are Cytoplasmic-facing. The span at 521–548 (QEEKEEKAALEKPMDLEEEKKQNDGEML) shows a compositional bias: basic and acidic residues. Residues 521–610 (QEEKEEKAAL…SVRKRRVRKD (90 aa)) form a disordered region. The span at 549-571 (EKEEESEPEEKSEEEIEIIEGQE) shows a compositional bias: acidic residues. S560, S576, S579, S581, S591, S594, and S601 each carry phosphoserine. The segment covering 601-610 (SVRKRRVRKD) has biased composition (basic residues).

It belongs to the calreticulin family. As to quaternary structure, interacts with PPIB. Interacts with ADAM2. Interacts with PDILT. As to expression, detected in testis (at protein level). Detected in testis.

The protein resides in the endoplasmic reticulum membrane. Functionally, functions during spermatogenesis as a chaperone for a range of client proteins that are important for sperm adhesion onto the egg zona pellucida and for subsequent penetration of the zona pellucida. Required for normal sperm migration from the uterus into the oviduct. Required for normal male fertility. Binds calcium ions. The sequence is that of Calmegin (CLGN) from Homo sapiens (Human).